The primary structure comprises 273 residues: uncharacterized protein (273 aa).

A helical transmembrane segment spans residues 7–25 (FFRWAFLIATVYVAYYFLV). Disordered regions lie at residues 34–154 (KPQK…LKMK) and 168–273 (LHNS…DSLW). Residues 36–54 (QKSKLTKLGKQKQRQKQKN) are compositionally biased toward basic residues. Positions 55–91 (TKKDTLVNRETPSKKSQKLETSDALKSKSKDSSKKEP) are enriched in basic and acidic residues. Residues 92–101 (VVVPKKGTPK) show a composition bias toward low complexity. Residues 115–144 (PKKEKLVGKNPAEKEDTTDVEDTQKLEQKH) are compositionally biased toward basic and acidic residues. Residues 145 to 154 (STTPSSLKMK) are compositionally biased toward polar residues. Basic residues predominate over residues 201-212 (KRQRQNQQKKLR). Positions 213-240 (AKEMQELADEEQRRRLAAHRKELHEANR) are enriched in basic and acidic residues. Polar residues predominate over residues 245–266 (LNNSSRSAYSYINNGQAGSSKG).

Its subcellular location is the cytoplasm. The protein resides in the membrane. This is an uncharacterized protein from Schizosaccharomyces pombe (strain 972 / ATCC 24843) (Fission yeast).